The chain runs to 53 residues: Small polypeptide DEVIL 7 (53 aa).

Residues 1–16 (MREKYTKEEAVKNWEK) are compositionally biased toward basic and acidic residues. The tract at residues 1 to 28 (MREKYTKEEAVKNWEKKKNKPSSPKGVG) is disordered. The tract at residues 22–53 (SSPKGVGEFLKKKKGRFYIIGKCITMLLCSHK) is required for DVL/RTFL small polypeptide activity. A helical transmembrane segment spans residues 30–46 (FLKKKKGRFYIIGKCIT).

Belongs to the DVL/RTFL small polypeptides family.

The protein localises to the cell membrane. Its function is as follows. Small polypeptide acting as a regulatory molecule which coordinates cellular responses required for differentiation, growth and development, probably by restricting polar cell proliferation in lateral organs and coordinating socket cell recruitment and differentiation at trichome sites. The sequence is that of Small polypeptide DEVIL 7 from Arabidopsis thaliana (Mouse-ear cress).